A 257-amino-acid chain; its full sequence is 3-deoxy-manno-octulosonate cytidylyltransferase (257 aa).

Belongs to the KdsB family.

Its subcellular location is the cytoplasm. It catalyses the reaction 3-deoxy-alpha-D-manno-oct-2-ulosonate + CTP = CMP-3-deoxy-beta-D-manno-octulosonate + diphosphate. The protein operates within nucleotide-sugar biosynthesis; CMP-3-deoxy-D-manno-octulosonate biosynthesis; CMP-3-deoxy-D-manno-octulosonate from 3-deoxy-D-manno-octulosonate and CTP: step 1/1. It participates in bacterial outer membrane biogenesis; lipopolysaccharide biosynthesis. In terms of biological role, activates KDO (a required 8-carbon sugar) for incorporation into bacterial lipopolysaccharide in Gram-negative bacteria. The polypeptide is 3-deoxy-manno-octulosonate cytidylyltransferase (Xylella fastidiosa (strain M23)).